Here is a 309-residue protein sequence, read N- to C-terminus: Homoserine O-succinyltransferase (309 aa).

The active-site Acyl-thioester intermediate is cysteine 142. Lysine 163 and serine 192 together coordinate substrate. Histidine 235 functions as the Proton acceptor in the catalytic mechanism. The active site involves glutamate 237. A substrate-binding site is contributed by arginine 249.

It belongs to the MetA family. As to quaternary structure, homodimer.

It is found in the cytoplasm. It carries out the reaction L-homoserine + succinyl-CoA = O-succinyl-L-homoserine + CoA. It functions in the pathway amino-acid biosynthesis; L-methionine biosynthesis via de novo pathway; O-succinyl-L-homoserine from L-homoserine: step 1/1. Functionally, transfers a succinyl group from succinyl-CoA to L-homoserine, forming succinyl-L-homoserine. The polypeptide is Homoserine O-succinyltransferase (Escherichia coli O139:H28 (strain E24377A / ETEC)).